The chain runs to 356 residues: DNA polymerase IV (356 aa).

A UmuC domain is found at 6 to 187 (IIHIDMDYFF…LDIGDFPGVG (182 aa)). Residues aspartate 10 and aspartate 105 each coordinate Mg(2+). Glutamate 106 is a catalytic residue.

It belongs to the DNA polymerase type-Y family. In terms of assembly, monomer. The cofactor is Mg(2+).

The protein resides in the cytoplasm. The catalysed reaction is DNA(n) + a 2'-deoxyribonucleoside 5'-triphosphate = DNA(n+1) + diphosphate. Poorly processive, error-prone DNA polymerase involved in untargeted mutagenesis. Copies undamaged DNA at stalled replication forks, which arise in vivo from mismatched or misaligned primer ends. These misaligned primers can be extended by PolIV. Exhibits no 3'-5' exonuclease (proofreading) activity. May be involved in translesional synthesis, in conjunction with the beta clamp from PolIII. The polypeptide is DNA polymerase IV (Staphylococcus aureus (strain JH1)).